The following is a 201-amino-acid chain: Sec-independent protein translocase protein TatB (201 aa).

The chain crosses the membrane as a helical span at residues 1–21; sequence MLDLGWSEILVIAVVLIVVVG. The tract at residues 96–201 is disordered; that stretch reads LSEAAKAKPA…RRKKTAGTAP (106 aa). Low complexity-rich tracts occupy residues 102–114 and 159–187; these read AKPAASSLPAADS and TSAKQAAPKAKAAAAAKAPTKNTASAPAK. Residues 189–201 are compositionally biased toward basic residues; sequence PSPRRKKTAGTAP.

This sequence belongs to the TatB family. The Tat system comprises two distinct complexes: a TatABC complex, containing multiple copies of TatA, TatB and TatC subunits, and a separate TatA complex, containing only TatA subunits. Substrates initially bind to the TatABC complex, which probably triggers association of the separate TatA complex to form the active translocon.

It localises to the cell inner membrane. Its function is as follows. Part of the twin-arginine translocation (Tat) system that transports large folded proteins containing a characteristic twin-arginine motif in their signal peptide across membranes. Together with TatC, TatB is part of a receptor directly interacting with Tat signal peptides. TatB may form an oligomeric binding site that transiently accommodates folded Tat precursor proteins before their translocation. The sequence is that of Sec-independent protein translocase protein TatB from Chelativorans sp. (strain BNC1).